Reading from the N-terminus, the 136-residue chain is Small ribosomal subunit protein uS8 (136 aa).

This sequence belongs to the universal ribosomal protein uS8 family. Part of the 30S ribosomal subunit. Contacts proteins S5 and S12.

Its function is as follows. One of the primary rRNA binding proteins, it binds directly to 16S rRNA central domain where it helps coordinate assembly of the platform of the 30S subunit. The sequence is that of Small ribosomal subunit protein uS8 from Frankia alni (strain DSM 45986 / CECT 9034 / ACN14a).